A 140-amino-acid polypeptide reads, in one-letter code: Respiratory supercomplex factor 1, mitochondrial (140 aa).

In terms of domain architecture, HIG1 spans 1–79 (MNTLQKIAYR…KESAEQKQTR (79 aa)). The next 2 membrane-spanning stretches (helical) occupy residues 16–32 (LVPL…VLAA) and 46–68 (YFRY…GMYY). A coiled-coil region spans residues 68-126 (YQKESAEQKQTREDKLREKAKLREQLWIEELERRDQLIKARKQRLEESKKELMKVAQEG).

The protein belongs to the RCF1 family. In terms of assembly, associates with the respiratory chain complex III/complex IV supercomplex.

It localises to the mitochondrion membrane. Functionally, cytochrome c oxidase subunit which plays a role in assembly of respiratory supercomplexes. The protein is Respiratory supercomplex factor 1, mitochondrial (RCF1) of Clavispora lusitaniae (strain ATCC 42720) (Yeast).